Consider the following 103-residue polypeptide: MQNQRIRIRLKAFDHRLIDQSTTEIVETAKRTGAQVRGPIPLPTRKERFTILVSPHVNKDARDQYEIRTHKRLIDIVEPTEKTVDALMRLDLAAGVDVQISLG.

The protein belongs to the universal ribosomal protein uS10 family. As to quaternary structure, part of the 30S ribosomal subunit.

Functionally, involved in the binding of tRNA to the ribosomes. The protein is Small ribosomal subunit protein uS10 of Buchnera aphidicola subsp. Acyrthosiphon pisum (strain 5A).